We begin with the raw amino-acid sequence, 522 residues long: Protein nucleotidyltransferase YdiU (522 aa).

Residues glycine 109, glycine 111, arginine 112, lysine 132, aspartate 144, glycine 145, arginine 195, and arginine 202 each coordinate ATP. Aspartate 271 acts as the Proton acceptor in catalysis. Mg(2+)-binding residues include asparagine 272 and aspartate 281. Residue aspartate 281 participates in ATP binding.

The protein belongs to the SELO family. Mg(2+) serves as cofactor. The cofactor is Mn(2+).

The catalysed reaction is L-seryl-[protein] + ATP = 3-O-(5'-adenylyl)-L-seryl-[protein] + diphosphate. It carries out the reaction L-threonyl-[protein] + ATP = 3-O-(5'-adenylyl)-L-threonyl-[protein] + diphosphate. The enzyme catalyses L-tyrosyl-[protein] + ATP = O-(5'-adenylyl)-L-tyrosyl-[protein] + diphosphate. It catalyses the reaction L-histidyl-[protein] + UTP = N(tele)-(5'-uridylyl)-L-histidyl-[protein] + diphosphate. The catalysed reaction is L-seryl-[protein] + UTP = O-(5'-uridylyl)-L-seryl-[protein] + diphosphate. It carries out the reaction L-tyrosyl-[protein] + UTP = O-(5'-uridylyl)-L-tyrosyl-[protein] + diphosphate. Functionally, nucleotidyltransferase involved in the post-translational modification of proteins. It can catalyze the addition of adenosine monophosphate (AMP) or uridine monophosphate (UMP) to a protein, resulting in modifications known as AMPylation and UMPylation. In Burkholderia ambifaria (strain ATCC BAA-244 / DSM 16087 / CCUG 44356 / LMG 19182 / AMMD) (Burkholderia cepacia (strain AMMD)), this protein is Protein nucleotidyltransferase YdiU.